The sequence spans 117 residues: Small ribosomal subunit protein uS17 (117 aa).

Residues 1-42 (MMAEAKKAAPKKAATAASKDADAKGPKHTPPNPKVRGRRKTR) form a disordered region.

This sequence belongs to the universal ribosomal protein uS17 family. In terms of assembly, part of the 30S ribosomal subunit.

In terms of biological role, one of the primary rRNA binding proteins, it binds specifically to the 5'-end of 16S ribosomal RNA. The chain is Small ribosomal subunit protein uS17 from Mycolicibacterium paratuberculosis (strain ATCC BAA-968 / K-10) (Mycobacterium paratuberculosis).